Reading from the N-terminus, the 128-residue chain is Fluoride-specific ion channel FluC (128 aa).

4 consecutive transmembrane segments (helical) span residues 5–25 (IVAIFVGAGFGALLRWFLSIG), 35–55 (LGTLASNLIGGYLIGIAVVAF), 67–87 (LFVITGFMGGLTTFSTYSVEV), and 96–116 (FGWALAVAALHLIGSFTLTGL). The Na(+) site is built by Gly-75 and Thr-78.

This sequence belongs to the fluoride channel Fluc/FEX (TC 1.A.43) family.

It is found in the cell inner membrane. It carries out the reaction fluoride(in) = fluoride(out). Na(+) is not transported, but it plays an essential structural role and its presence is essential for fluoride channel function. Its function is as follows. Fluoride-specific ion channel. Important for reducing fluoride concentration in the cell, thus reducing its toxicity. The polypeptide is Fluoride-specific ion channel FluC (Burkholderia mallei (strain NCTC 10247)).